The following is a 186-amino-acid chain: Peptidyl-tRNA hydrolase (186 aa).

Tyrosine 14 provides a ligand contact to tRNA. Histidine 19 (proton acceptor) is an active-site residue. TRNA contacts are provided by tyrosine 64, asparagine 66, and asparagine 112.

The protein belongs to the PTH family. As to quaternary structure, monomer.

The protein resides in the cytoplasm. It carries out the reaction an N-acyl-L-alpha-aminoacyl-tRNA + H2O = an N-acyl-L-amino acid + a tRNA + H(+). In terms of biological role, hydrolyzes ribosome-free peptidyl-tRNAs (with 1 or more amino acids incorporated), which drop off the ribosome during protein synthesis, or as a result of ribosome stalling. Its function is as follows. Catalyzes the release of premature peptidyl moieties from peptidyl-tRNA molecules trapped in stalled 50S ribosomal subunits, and thus maintains levels of free tRNAs and 50S ribosomes. This chain is Peptidyl-tRNA hydrolase, found in Lachnospira eligens (strain ATCC 27750 / DSM 3376 / VPI C15-48 / C15-B4) (Eubacterium eligens).